A 300-amino-acid chain; its full sequence is ATP-dependent (S)-NAD(P)H-hydrate dehydratase (300 aa).

The region spanning 14–293 (LLTLFKTIVP…NEISAVFRSD (280 aa)) is the YjeF C-terminal domain. (6S)-NADPHX is bound by residues glycine 114 and 167-173 (NAMEFRR). ATP is bound by residues 198–202 (KGVND) and 219–228 (GSGRRCGGQG). Aspartate 229 lines the (6S)-NADPHX pocket.

It belongs to the NnrD/CARKD family. The cofactor is Mg(2+).

It catalyses the reaction (6S)-NADHX + ATP = ADP + phosphate + NADH + H(+). The enzyme catalyses (6S)-NADPHX + ATP = ADP + phosphate + NADPH + H(+). Its function is as follows. Catalyzes the dehydration of the S-form of NAD(P)HX at the expense of ATP, which is converted to ADP. Together with NAD(P)HX epimerase, which catalyzes the epimerization of the S- and R-forms, the enzyme allows the repair of both epimers of NAD(P)HX, a damaged form of NAD(P)H that is a result of enzymatic or heat-dependent hydration. This Drosophila pseudoobscura pseudoobscura (Fruit fly) protein is ATP-dependent (S)-NAD(P)H-hydrate dehydratase.